We begin with the raw amino-acid sequence, 90 residues long: UPF0298 protein BLi01717/BL02989 (90 aa).

This sequence belongs to the UPF0298 family.

The protein resides in the cytoplasm. This chain is UPF0298 protein BLi01717/BL02989, found in Bacillus licheniformis (strain ATCC 14580 / DSM 13 / JCM 2505 / CCUG 7422 / NBRC 12200 / NCIMB 9375 / NCTC 10341 / NRRL NRS-1264 / Gibson 46).